Reading from the N-terminus, the 447-residue chain is Argininosuccinate synthase (447 aa).

ATP contacts are provided by residues A17–S25 and A43. Y99 is an L-citrulline binding site. ATP is bound by residues G129 and T131. 3 residues coordinate L-aspartate: T131, N135, and D136. N135 contacts L-citrulline. Position 136 (D136) interacts with ATP. R139 and S192 together coordinate L-citrulline. Residue D194 participates in ATP binding. The L-citrulline site is built by T201, E203, and E280.

This sequence belongs to the argininosuccinate synthase family. Type 2 subfamily. As to quaternary structure, homotetramer.

The protein resides in the cytoplasm. It catalyses the reaction L-citrulline + L-aspartate + ATP = 2-(N(omega)-L-arginino)succinate + AMP + diphosphate + H(+). It participates in amino-acid biosynthesis; L-arginine biosynthesis; L-arginine from L-ornithine and carbamoyl phosphate: step 2/3. This is Argininosuccinate synthase from Shigella boydii serotype 18 (strain CDC 3083-94 / BS512).